Reading from the N-terminus, the 185-residue chain is Ribosome-recycling factor (185 aa).

The protein belongs to the RRF family.

Its subcellular location is the cytoplasm. Responsible for the release of ribosomes from messenger RNA at the termination of protein biosynthesis. May increase the efficiency of translation by recycling ribosomes from one round of translation to another. This is Ribosome-recycling factor from Corynebacterium glutamicum (strain R).